We begin with the raw amino-acid sequence, 332 residues long: Ferredoxin--NADP reductase 1 (332 aa).

Asp-35, Lys-43, Phe-48, Val-88, Phe-123, Asp-284, and Thr-325 together coordinate FAD.

This sequence belongs to the ferredoxin--NADP reductase type 2 family. Homodimer. FAD is required as a cofactor.

It carries out the reaction 2 reduced [2Fe-2S]-[ferredoxin] + NADP(+) + H(+) = 2 oxidized [2Fe-2S]-[ferredoxin] + NADPH. This chain is Ferredoxin--NADP reductase 1, found in Listeria welshimeri serovar 6b (strain ATCC 35897 / DSM 20650 / CCUG 15529 / CIP 8149 / NCTC 11857 / SLCC 5334 / V8).